Consider the following 476-residue polypeptide: Aspartyl/glutamyl-tRNA(Asn/Gln) amidotransferase subunit B (476 aa).

Belongs to the GatB/GatE family. GatB subfamily. In terms of assembly, heterotrimer of A, B and C subunits.

It carries out the reaction L-glutamyl-tRNA(Gln) + L-glutamine + ATP + H2O = L-glutaminyl-tRNA(Gln) + L-glutamate + ADP + phosphate + H(+). The enzyme catalyses L-aspartyl-tRNA(Asn) + L-glutamine + ATP + H2O = L-asparaginyl-tRNA(Asn) + L-glutamate + ADP + phosphate + 2 H(+). Functionally, allows the formation of correctly charged Asn-tRNA(Asn) or Gln-tRNA(Gln) through the transamidation of misacylated Asp-tRNA(Asn) or Glu-tRNA(Gln) in organisms which lack either or both of asparaginyl-tRNA or glutaminyl-tRNA synthetases. The reaction takes place in the presence of glutamine and ATP through an activated phospho-Asp-tRNA(Asn) or phospho-Glu-tRNA(Gln). This is Aspartyl/glutamyl-tRNA(Asn/Gln) amidotransferase subunit B from Listeria welshimeri serovar 6b (strain ATCC 35897 / DSM 20650 / CCUG 15529 / CIP 8149 / NCTC 11857 / SLCC 5334 / V8).